We begin with the raw amino-acid sequence, 130 residues long: Small ribosomal subunit protein uS9 (130 aa).

Belongs to the universal ribosomal protein uS9 family.

This is Small ribosomal subunit protein uS9 from Phytoplasma australiense.